An 813-amino-acid polypeptide reads, in one-letter code: MGNYSTKIDEKWQKKWEENSLYKFNNDNLDKKLYVLEMFSYPSGSKLHAGHWFNYGPVDSWARFKRMQGYNVFQPMGFDAFGLPAENYAIKTGIHPKDSTFKNIETMETQLKAMGAMFNWENEVITCSPDYYKWTQWLFLKLYEKGLAYKKKAPVNWCPSCNTVLANEQVLDGKCERCDSNVDKKNLEQWFLKITDYADELLEKLDELDWPEKTKAMQKHWIGKSVGAEVTFNVADSDLSFNVFTTRVDTLFGVTYVVLAPENDLVDKLTTPENKAEVESYKTQAKNQSDIERQSITREKTGVFSGSYAINPINGKKVPIWIGDYVLNTYGTGCVMAVPAHDERDFAFATKYNLPIERVIEGGDSLPYTEYGKMVNSGEFDGLFGNKAKEAVISKLESMNLGRKKINYRLRDWLVSRQRYWGAPIPIIYCEKCGTVEVPIEQLPVELPYNVEFSPDGKSPLGKCDDFINTTCPKCGGPAKREADTLDTFVCSSWYYLRYPDNNNEKDAFNPELINKMLPVDKYVGGPEHACMHLLYARFITKALRDMGYLNFDEPFLSLTHQGLILGPDGLKMSKSKGNTISPDDYIKEFGADVFRMYLMFGFDYTEGGAWSDDAIKSIGKFVDRVERILENAREEIKNSKDNKSTMDKDEKELNYVRHHSIKSITEDIDKMQFNTSIARLMEFTNALSKYLGSDTLRNASFLRESIIDFITLLAPFAPHFAEEQWELIGINSSIFNEKWPEFDPKALIKDEVEIAVQVNGKIRAKINIYTSSSEDEIKESALNNDDIKNSIGDKEIKKVIVIKNRLVNIVAK.

A 'HIGH' region motif is present at residues 40-51; that stretch reads SYPSGSKLHAGH. Residues 572 to 576 carry the 'KMSKS' region motif; the sequence is KMSKS. Lysine 575 contributes to the ATP binding site.

This sequence belongs to the class-I aminoacyl-tRNA synthetase family.

The protein resides in the cytoplasm. It carries out the reaction tRNA(Leu) + L-leucine + ATP = L-leucyl-tRNA(Leu) + AMP + diphosphate. The sequence is that of Leucine--tRNA ligase from Clostridium botulinum (strain Langeland / NCTC 10281 / Type F).